A 237-amino-acid polypeptide reads, in one-letter code: Phosphoribosylaminoimidazole-succinocarboxamide synthase (237 aa).

The protein belongs to the SAICAR synthetase family.

It catalyses the reaction 5-amino-1-(5-phospho-D-ribosyl)imidazole-4-carboxylate + L-aspartate + ATP = (2S)-2-[5-amino-1-(5-phospho-beta-D-ribosyl)imidazole-4-carboxamido]succinate + ADP + phosphate + 2 H(+). The protein operates within purine metabolism; IMP biosynthesis via de novo pathway; 5-amino-1-(5-phospho-D-ribosyl)imidazole-4-carboxamide from 5-amino-1-(5-phospho-D-ribosyl)imidazole-4-carboxylate: step 1/2. The protein is Phosphoribosylaminoimidazole-succinocarboxamide synthase of Listeria monocytogenes serotype 4b (strain CLIP80459).